Here is a 648-residue protein sequence, read N- to C-terminus: L-aspartate oxidase 2-b, chloroplastic (648 aa).

Residues 98–101 (SGIA), K120, 127–134 (STNYAQGG), and D298 contribute to the FAD site. R373 (proton donor/acceptor) is an active-site residue. FAD contacts are provided by residues E458 and 474-475 (SL).

It belongs to the FAD-dependent oxidoreductase 2 family. NadB subfamily. FAD serves as cofactor.

Its subcellular location is the plastid. It localises to the chloroplast. It catalyses the reaction L-aspartate + O2 = iminosuccinate + H2O2. It functions in the pathway alkaloid biosynthesis; nicotine biosynthesis. The protein operates within cofactor biosynthesis; NAD(+) biosynthesis; iminoaspartate from L-aspartate (oxidase route): step 1/1. Functionally, involved in the biosynthesis of pyridine alkaloid natural products, leading mainly to the production of anabasine, anatabine, nicotine and nornicotine, effective deterrents against herbivores with antiparasitic and pesticide properties (neurotoxins); nornicotine serves as the precursor in the synthesis of the carcinogen compound N'-nitrosonornicotine (NNN). Catalyzes the oxidation of L-aspartate to iminoaspartate. The chain is L-aspartate oxidase 2-b, chloroplastic from Nicotiana tabacum (Common tobacco).